Reading from the N-terminus, the 880-residue chain is MOG interacting and ectopic P-granules protein 1 (880 aa).

Residues 1-20 (MVTSDETVLATTTNKTSITT) show a composition bias toward polar residues. Disordered stretches follow at residues 1-37 (MVTSDETVLATTTNKTSITTEPMEPKSSDESTDSETD), 82-257 (DKVE…DDNE), and 350-370 (ERPKLSDSEKRERQQMKQHNP). Basic and acidic residues predominate over residues 23–37 (MEPKSSDESTDSETD). Residues 87–105 (ATNSVVDLSSNGSSATTSV) show a composition bias toward polar residues. Over residues 108–120 (EEQEEKANEDETN) the composition is skewed to acidic residues. 2 stretches are compositionally biased toward basic and acidic residues: residues 154-170 (SKSDGETETDRVAIKDS) and 183-193 (KPEEKEEKNDT). The segment covering 215–224 (QLDDDDDDIQ) has biased composition (acidic residues). Basic and acidic residues-rich tracts occupy residues 235–252 (QKTEETKQEPKQEAKAEP) and 350–364 (ERPKLSDSEKRERQQ). C2H2-type zinc fingers lie at residues 436–459 (SRCGVCGFQTESKLAMAAHKETLH) and 465–488 (FQCTLCKETDTNEQRMKEHYFEAH). Residues 501–523 (YPCAICEEDFNFKGVREQHYKQC) form a CCHC-type zinc finger. 4 consecutive C2H2-type zinc fingers follow at residues 728–751 (FQCEICDQTVHEKDKYLSHLQVLH), 768–791 (LACSRCRDRFWTYEGLERHLVMSH), 809–830 (GRCKTCGKQYAFNMLQHLVADH), and 841–864 (YSCDVCAFKCSSYQTLEAHLSSTH).

As to quaternary structure, interacts with hda-1, let-418, lin-1, mog-1, mog-4, mog-5, mog-6, pie-1 and unc-98.

Its subcellular location is the nucleus. Functionally, has a broad role in development, specifically in the genetic pathway SynMuvB that negatively regulates specification of the vulval cell fate. Required for fem-3 3'-UTR-mediated repression in the regulation of the sperm/oocyte switch. Acts by regulating the translation of fem-3 mRNA, by binding to its 3'-UTR. This Caenorhabditis briggsae protein is MOG interacting and ectopic P-granules protein 1.